The sequence spans 854 residues: Gamma-secretase-activating protein (854 aa).

Belongs to the GSAP family. In terms of assembly, interacts with APP; specifically interacts with the CTF-alpha product of APP. Interacts with the gamma-secretase complex. Post-translationally, the protein is first synthesized as a holoprotein form of 98 kDa and rapidly processed into the gamma-secretase-activating protein 16 kDa C-terminal form, which constitutes the predominant form. As to expression, widely expressed.

The protein localises to the golgi apparatus. The protein resides in the trans-Golgi network. Functionally, regulator of gamma-secretase activity, which specifically activates the production of amyloid-beta protein (amyloid-beta protein 40 and amyloid-beta protein 42), without affecting the cleavage of other gamma-secretase targets such has Notch. The gamma-secretase complex is an endoprotease complex that catalyzes the intramembrane cleavage of integral membrane proteins such as Notch receptors and APP (amyloid-beta precursor protein). Specifically promotes the gamma-cleavage of APP CTF-alpha (also named APP-CTF) by the gamma-secretase complex to generate amyloid-beta, while it reduces the epsilon-cleavage of APP CTF-alpha, leading to a low production of AICD. This is Gamma-secretase-activating protein (GSAP) from Homo sapiens (Human).